A 945-amino-acid chain; its full sequence is Probable inorganic carbon transporter subunit DabA (945 aa).

Residues C408, D410, H651, and C666 each contribute to the Zn(2+) site.

Belongs to the inorganic carbon transporter (TC 9.A.2) DabA family. In terms of assembly, forms a complex with DabB. Zn(2+) is required as a cofactor.

It is found in the cell inner membrane. Part of an energy-coupled inorganic carbon pump. This Sulfurihydrogenibium azorense (strain DSM 15241 / OCM 825 / Az-Fu1) protein is Probable inorganic carbon transporter subunit DabA.